A 185-amino-acid chain; its full sequence is Prorelaxin 1 (185 aa).

Residues 1-22 (MSSRFLLQLLGFWLLLSQPCRT) form the signal peptide. 3 cysteine pairs are disulfide-bonded: cysteine 36/cysteine 171, cysteine 48/cysteine 185, and cysteine 170/cysteine 175. Residues 58–156 (SQEEPALLAR…LKYLQSDTHS (99 aa)) constitute a propeptide, connecting peptide. The segment at 135-161 (RLGEAEDGSPPGLKYLQSDTHSRKKRE) is disordered.

Belongs to the insulin family. As to quaternary structure, heterodimer of a B chain and an A chain linked by two disulfide bonds.

The protein localises to the secreted. Relaxin is an ovarian hormone that acts with estrogen to produce dilatation of the birth canal in many mammals. The sequence is that of Prorelaxin 1 (Rln1) from Mus musculus (Mouse).